Consider the following 235-residue polypeptide: Endonuclease V (235 aa).

2 residues coordinate Mg(2+): D47 and D115.

The protein belongs to the endonuclease V family. Mg(2+) is required as a cofactor.

Its subcellular location is the cytoplasm. It catalyses the reaction Endonucleolytic cleavage at apurinic or apyrimidinic sites to products with a 5'-phosphate.. Its function is as follows. DNA repair enzyme involved in the repair of deaminated bases. Selectively cleaves double-stranded DNA at the second phosphodiester bond 3' to a deoxyinosine leaving behind the intact lesion on the nicked DNA. The polypeptide is Endonuclease V (Myxococcus xanthus (strain DK1622)).